Consider the following 167-residue polypeptide: Small ribosomal subunit protein uS5 (167 aa).

Residues 12–75 (LQEKLIAVNR…EKARRNIVTV (64 aa)) enclose the S5 DRBM domain.

This sequence belongs to the universal ribosomal protein uS5 family. As to quaternary structure, part of the 30S ribosomal subunit. Contacts proteins S4 and S8.

Its function is as follows. With S4 and S12 plays an important role in translational accuracy. In terms of biological role, located at the back of the 30S subunit body where it stabilizes the conformation of the head with respect to the body. The polypeptide is Small ribosomal subunit protein uS5 (Shewanella baltica (strain OS223)).